Reading from the N-terminus, the 230-residue chain is 5'-methylthioadenosine/S-adenosylhomocysteine nucleosidase (230 aa).

Catalysis depends on Glu12, which acts as the Proton acceptor. Substrate contacts are provided by residues Gly78, Ile153, and 174–175 (ME). Asp198 functions as the Proton donor in the catalytic mechanism.

This sequence belongs to the PNP/UDP phosphorylase family. MtnN subfamily.

It catalyses the reaction S-adenosyl-L-homocysteine + H2O = S-(5-deoxy-D-ribos-5-yl)-L-homocysteine + adenine. It carries out the reaction S-methyl-5'-thioadenosine + H2O = 5-(methylsulfanyl)-D-ribose + adenine. The enzyme catalyses 5'-deoxyadenosine + H2O = 5-deoxy-D-ribose + adenine. Its pathway is amino-acid biosynthesis; L-methionine biosynthesis via salvage pathway; S-methyl-5-thio-alpha-D-ribose 1-phosphate from S-methyl-5'-thioadenosine (hydrolase route): step 1/2. Functionally, catalyzes the irreversible cleavage of the glycosidic bond in both 5'-methylthioadenosine (MTA) and S-adenosylhomocysteine (SAH/AdoHcy) to adenine and the corresponding thioribose, 5'-methylthioribose and S-ribosylhomocysteine, respectively. Also cleaves 5'-deoxyadenosine, a toxic by-product of radical S-adenosylmethionine (SAM) enzymes, into 5-deoxyribose and adenine. The polypeptide is 5'-methylthioadenosine/S-adenosylhomocysteine nucleosidase (Shewanella frigidimarina (strain NCIMB 400)).